Consider the following 752-residue polypeptide: Palmitoyltransferase AKR1 (752 aa).

2 disordered regions span residues 1 to 21 (MTAE…KSDY) and 49 to 68 (ASSE…LGSV). The Cytoplasmic portion of the chain corresponds to 1-318 (MTAEEVDKES…FPLPQYFSAS (318 aa)). Basic and acidic residues-rich tracts occupy residues 9–21 (ESDP…KSDY) and 51–68 (SELK…LGSV). ANK repeat units lie at residues 72–102 (PILE…DLSN), 108–137 (ERVS…EVNF), 142–171 (LDAT…DPNI), 175–208 (QGYN…DVDQ), 212–241 (HQRT…DVKN), and 245–274 (AGFT…DFFQ). A helical membrane pass occupies residues 319 to 339 (TGKMLTFFLPWVLIPLVFYIF). At 340 to 341 (SK) the chain is on the lumenal side. A helical membrane pass occupies residues 342-362 (ITFFIALLINTIVLVISGLVL). Over 363-380 (SRLVVPSYLLSKRHPILN) the chain is Cytoplasmic. A helical membrane pass occupies residues 381-401 (SPLLAGILSGTIAIAFFIWFT). Topologically, residues 402-412 (KISILTFTEKP) are lumenal. A helical membrane pass occupies residues 413–433 (VGNIIMLGFFIGLITLFIGLM). The Cytoplasmic portion of the chain corresponds to 434-509 (KSDPGYIPGT…YNQIGLLNHK (76 aa)). Positions 466-516 (HFCVHTWIRIPLRSKYDRDSACLISAFDHFCPWVYNQIGLLNHKLFYMFVV) constitute a DHHC domain. Catalysis depends on C496, which acts as the S-palmitoyl cysteine intermediate. A helical transmembrane segment spans residues 510 to 530 (LFYMFVVLLEISVWWFLPLMM). The Lumenal portion of the chain corresponds to 531–567 (EYFDELEDYLENRKGKHFGDCHFLGDEDLCFGLHHDT). The helical transmembrane segment at 568–588 (FNFLLLCWVIFQAFWVLCLIA) threads the bilayer. The Cytoplasmic portion of the chain corresponds to 589-752 (VQTVQMLKGV…TLPNATEELV (164 aa)).

This sequence belongs to the DHHC palmitoyltransferase family. AKR/ZDHHC17 subfamily.

It localises to the early endosome membrane. The protein localises to the golgi apparatus membrane. It carries out the reaction L-cysteinyl-[protein] + hexadecanoyl-CoA = S-hexadecanoyl-L-cysteinyl-[protein] + CoA. Palmitoyltransferase specific for casein kinase 1. This chain is Palmitoyltransferase AKR1 (AKR1), found in Kluyveromyces lactis (strain ATCC 8585 / CBS 2359 / DSM 70799 / NBRC 1267 / NRRL Y-1140 / WM37) (Yeast).